The chain runs to 90 residues: Large ribosomal subunit protein bL31B-1 (90 aa).

The protein belongs to the bacterial ribosomal protein bL31 family. Type B subfamily. In terms of assembly, part of the 50S ribosomal subunit.

In Streptomyces coelicolor (strain ATCC BAA-471 / A3(2) / M145), this protein is Large ribosomal subunit protein bL31B-1.